Consider the following 586-residue polypeptide: Ezrin (586 aa).

The FERM domain occupies 2–295 (PKPINVRVTT…GNHELYMRRR (294 aa)). Lys-60 is modified (N6-acetyllysine). A [IL]-x-C-x-x-[DE] motif motif is present at residues 115-120 (IYCPPE). Residue Tyr-146 is modified to Phosphotyrosine; by PDGFR. The interval 244 to 586 (EIRNISFNDK…KQRIDEFEAM (343 aa)) is interaction with SCYL3. Positions 302-462 (VQQMKAQARE…QDDLVKTKEE (161 aa)) form a coiled coil. The disordered stretch occupies residues 306–338 (KAQAREEKHQKQLERQQLETEKKRRETVEREKE). Residues 308-338 (QAREEKHQKQLERQQLETEKKRRETVEREKE) show a composition bias toward basic and acidic residues. Ser-366 is modified (phosphoserine). Position 478 is a phosphotyrosine (Tyr-478). Position 535 is a phosphoserine (Ser-535). Thr-567 is modified (phosphothreonine; by ROCK2 and PKC/PRKCI).

As to quaternary structure, interacts with PODXL and NHERF2. Found in a complex with EZR, PODXL and NHERF2. Interacts with PALS1. Interacts with MCC, PLEKHG6, SCYL3/PACE1, NHERF1 and TMEM8B. Interacts (when phosphorylated) with FES/FPS. Interacts with dimeric S100P, the interaction may be activating through unmasking of F-actin binding sites. Identified in complexes that contain VIM, EZR, AHNAK, BFSP1, BFSP2, ANK2, PLEC, PRX and spectrin. Detected in a complex composed of at least EZR, AHNAK, PPL and PRX. Interacts with PDPN (via cytoplasmic domain); activates RHOA and promotes epithelial-mesenchymal transition. Interacts with SPN/CD43 cytoplasmic tail, CD44 and ICAM2. Interacts with SLC9A3; interaction targets SLC9A3 to the apical membrane. Interacts with SLC9A1; regulates interactions of SLC9A1 with cytoskeletal and promotes stress fiber formation. Interacts with CLIC5; may work together in a complex which also includes RDX and MYO6 to stabilize linkages between the plasma membrane and subjacent actin cytoskeleton at the base of stereocilia. In terms of processing, phosphorylated by tyrosine-protein kinases. Phosphorylation by ROCK2 suppresses the head-to-tail association of the N-terminal and C-terminal halves resulting in an opened conformation which is capable of actin and membrane-binding. Post-translationally, S-nitrosylation is induced by interferon-gamma and oxidatively-modified low-densitity lipoprotein (LDL(ox)) possibly implicating the iNOS-S100A8/9 transnitrosylase complex. In terms of tissue distribution, glomerular epithelium cell (podocyte). Expressed in cerebrum, cerebellum and hippocampus (at protein level). Expressed in the small intestine, lung, kidney and ovaries.

It localises to the apical cell membrane. It is found in the cell projection. Its subcellular location is the microvillus membrane. The protein resides in the ruffle membrane. The protein localises to the cytoplasm. It localises to the cell cortex. It is found in the cytoskeleton. Its subcellular location is the microvillus. A head-to-tail association, of the N-terminal and C-terminal halves results in a closed conformation (inactive form) which is incapable of actin or membrane-binding. Its function is as follows. Probably involved in connections of major cytoskeletal structures to the plasma membrane. In epithelial cells, required for the formation of microvilli and membrane ruffles on the apical pole. Along with PLEKHG6, required for normal macropinocytosis. This is Ezrin (Ezr) from Rattus norvegicus (Rat).